A 238-amino-acid chain; its full sequence is Aspartate/glutamate leucyltransferase (238 aa).

This sequence belongs to the R-transferase family. Bpt subfamily.

The protein resides in the cytoplasm. The enzyme catalyses N-terminal L-glutamyl-[protein] + L-leucyl-tRNA(Leu) = N-terminal L-leucyl-L-glutamyl-[protein] + tRNA(Leu) + H(+). It catalyses the reaction N-terminal L-aspartyl-[protein] + L-leucyl-tRNA(Leu) = N-terminal L-leucyl-L-aspartyl-[protein] + tRNA(Leu) + H(+). Functions in the N-end rule pathway of protein degradation where it conjugates Leu from its aminoacyl-tRNA to the N-termini of proteins containing an N-terminal aspartate or glutamate. This Shewanella sp. (strain ANA-3) protein is Aspartate/glutamate leucyltransferase.